The sequence spans 549 residues: MAAKEVKFGDSARERMVAGVNVLANAVKVTLGPKGRNVVLERSFGAPTVTKDGVSVAKEIELKDKFENMGAQMVKEVASKTSDIAGDGTTTATVLAQSIVREGMKFVAAGMNPMDLKRGIDKAVVATIEELKKLSKPCSTNKEIAQVGSISANSDADIGGIIAQAMEKVGKEGVITVEDGKSLNNELDVVEGMQFDRGYLSPYFINNPDKQVAILENPFVLLFDKKISNIRDLLPVLEQVAKAGRPLLIIAEDVDGEALATLVVNNIRGILKTCAVKAPGFGDRRKAMLEDIAILTGGQVIAEEVGLTLEKATLQDLGQAKRIEIGKENTIIIDGAGEASRIEARVKQIRVQIEEATSDYDREKLQERVAKLAGGVAVIKVGAATEVEMKEKKARVEDALHATRAAVEEGIVPGGGVALLRARASLAGLKGDNHDQDAGIKIVLRAMEQPLREIVANAGDEASVVVNKVVEGSGNFGYNAATGEYGDMVEMGVLDPTKVTRTALQNAASVASLMLTTDCMVGELAEDKPAGGMPGMGGMGGMGGMDMGM.

ATP-binding positions include 30 to 33, Lys-51, 87 to 91, Gly-415, 479 to 481, and Asp-495; these read TLGP, DGTTT, and NAA.

This sequence belongs to the chaperonin (HSP60) family. In terms of assembly, forms a cylinder of 14 subunits composed of two heptameric rings stacked back-to-back. Interacts with the co-chaperonin GroES.

The protein localises to the cytoplasm. The enzyme catalyses ATP + H2O + a folded polypeptide = ADP + phosphate + an unfolded polypeptide.. Functionally, together with its co-chaperonin GroES, plays an essential role in assisting protein folding. The GroEL-GroES system forms a nano-cage that allows encapsulation of the non-native substrate proteins and provides a physical environment optimized to promote and accelerate protein folding. The protein is Chaperonin GroEL 1 of Azoarcus sp. (strain BH72).